A 609-amino-acid chain; its full sequence is UvrABC system protein C (609 aa).

A GIY-YIG domain is found at 16-94 (SSAGVYRMYD…IKQYMPRYNV (79 aa)). One can recognise a UVR domain in the interval 203-238 (QQVIATLVGKMEQAAMDLNYEDAARYRDQISALRRV).

The protein belongs to the UvrC family. Interacts with UvrB in an incision complex.

The protein localises to the cytoplasm. Functionally, the UvrABC repair system catalyzes the recognition and processing of DNA lesions. UvrC both incises the 5' and 3' sides of the lesion. The N-terminal half is responsible for the 3' incision and the C-terminal half is responsible for the 5' incision. The chain is UvrABC system protein C from Shewanella loihica (strain ATCC BAA-1088 / PV-4).